The sequence spans 446 residues: Methionine aminopeptidase 2-3 (446 aa).

The disordered stretch occupies residues 14–116 (ITDAGANGAD…ENRYRTTSEE (103 aa)). A compositionally biased stretch (basic residues) spans 61 to 76 (AKKKKNKKRKPKKKQP). Polar residues predominate over residues 86-96 (PLSQLFPNNSY). Residues 98-116 (KGEEVEYKDENRYRTTSEE) show a composition bias toward basic and acidic residues. His-199 is a substrate binding site. Residues Asp-219, Asp-230, and His-299 each contribute to the a divalent metal cation site. Substrate is bound at residue His-307. 2 residues coordinate a divalent metal cation: Glu-332 and Glu-427.

The protein belongs to the peptidase M24A family. Methionine aminopeptidase eukaryotic type 2 subfamily. Co(2+) serves as cofactor. Zn(2+) is required as a cofactor. It depends on Mn(2+) as a cofactor. The cofactor is Fe(2+).

It localises to the cytoplasm. It catalyses the reaction Release of N-terminal amino acids, preferentially methionine, from peptides and arylamides.. Cotranslationally removes the N-terminal methionine from nascent proteins. The N-terminal methionine is often cleaved when the second residue in the primary sequence is small and uncharged (Met-Ala-, Cys, Gly, Pro, Ser, Thr, or Val). The polypeptide is Methionine aminopeptidase 2-3 (Aspergillus fumigatus (strain CBS 144.89 / FGSC A1163 / CEA10) (Neosartorya fumigata)).